Here is a 330-residue protein sequence, read N- to C-terminus: Ferredoxin--NADP reductase (330 aa).

Residues Glu-35, Gln-43, Tyr-48, Val-90, Phe-123, Asp-285, and Thr-326 each coordinate FAD.

This sequence belongs to the ferredoxin--NADP reductase type 2 family. Homodimer. It depends on FAD as a cofactor.

The catalysed reaction is 2 reduced [2Fe-2S]-[ferredoxin] + NADP(+) + H(+) = 2 oxidized [2Fe-2S]-[ferredoxin] + NADPH. The sequence is that of Ferredoxin--NADP reductase from Streptococcus pyogenes serotype M28 (strain MGAS6180).